We begin with the raw amino-acid sequence, 559 residues long: Estrogen receptor beta (559 aa).

The interval 1–155 (MAVACSPEKD…SSGGKADLHF (155 aa)) is modulating. Positions 128–148 (TSSKSARRRSQENEEGEVSSG) are disordered. 2 NR C4-type zinc fingers span residues 156–176 (CAVC…CEGC) and 192–216 (CPAT…LHKC). Residues 156–221 (CAVCHDYASG…RLHKCYNVGM (66 aa)) constitute a DNA-binding region (nuclear receptor). The segment covering 243-254 (RLSSQGRTSGPS) has biased composition (polar residues). The disordered stretch occupies residues 243–269 (RLSSQGRTSGPSVLNGPAVGPLNTPQP). The 237-residue stretch at 273–509 (TSKQLIERIM…DLLLEMLDAH (237 aa)) folds into the NR LBD domain. The disordered stretch occupies residues 514–559 (SRLPRRSPQQETVEQCDAPARPHSPGTSGPTNTWTPSCTGGRGEPQ). The segment covering 538 to 551 (PGTSGPTNTWTPSC) has biased composition (polar residues).

Belongs to the nuclear hormone receptor family. NR3 subfamily. Binds DNA as a homodimer. Can form a heterodimer with ER-alpha.

It is found in the nucleus. Binds estrogens with an affinity similar to that of ER-alpha, and activates expression of reporter genes containing estrogen response elements (ERE) in an estrogen-dependent manner. This is Estrogen receptor beta (esr2) from Sparus aurata (Gilthead sea bream).